Reading from the N-terminus, the 1131-residue chain is DNA polymerase II large subunit (1131 aa).

Belongs to the archaeal DNA polymerase II family. Heterodimer of a large subunit and a small subunit.

The enzyme catalyses DNA(n) + a 2'-deoxyribonucleoside 5'-triphosphate = DNA(n+1) + diphosphate. It carries out the reaction Exonucleolytic cleavage in the 3'- to 5'-direction to yield nucleoside 5'-phosphates.. Its function is as follows. Possesses two activities: a DNA synthesis (polymerase) and an exonucleolytic activity that degrades single-stranded DNA in the 3'- to 5'-direction. Has a template-primer preference which is characteristic of a replicative DNA polymerase. This chain is DNA polymerase II large subunit, found in Methanococcus maripaludis (strain C5 / ATCC BAA-1333).